We begin with the raw amino-acid sequence, 912 residues long: DNA ligase 4 (912 aa).

E271, T272, K273, L274, R278, E331, K345, F367, E427, K432, K449, and K451 together coordinate ATP. The active-site N6-AMP-lysine intermediate is the K273. Residue E331 participates in Mg(2+) binding. E427 is a Mg(2+) binding site. The required for catalytic activity stretch occupies residues 610–620 (LATKHLHVGDD). 2 BRCT domains span residues 654-743 (KVSN…PRFM) and 846-912 (LRFH…QYLL).

The protein belongs to the ATP-dependent DNA ligase family. As to quaternary structure, interacts with XRCC4; the LIG4-XRCC4 subcomplex has a 1:2 stoichiometry and XRCC4 is required for LIG4 stability. Component of the core long-range non-homologous end joining (NHEJ) complex (also named DNA-PK complex) composed of PRKDC, LIG4, XRCC4, XRCC6/Ku70, XRCC5/Ku86 and NHEJ1/XLF. Additional component of the NHEJ complex includes PAXX. Following autophosphorylation, PRKDC dissociates from DNA, leading to formation of the short-range NHEJ complex, composed of LIG4, XRCC4, XRCC6/Ku70, XRCC5/Ku86 and NHEJ1/XLF. Interacts with DCLRE1C; the interaction is direct. Interacts with APLF. Mg(2+) is required as a cofactor.

It is found in the nucleus. It carries out the reaction ATP + (deoxyribonucleotide)n-3'-hydroxyl + 5'-phospho-(deoxyribonucleotide)m = (deoxyribonucleotide)n+m + AMP + diphosphate.. In terms of biological role, DNA ligase involved in DNA non-homologous end joining (NHEJ); required for double-strand break (DSB) repair and V(D)J recombination. Catalyzes the NHEJ ligation step of the broken DNA during DSB repair by resealing the DNA breaks after the gap filling is completed. Joins single-strand breaks in a double-stranded polydeoxynucleotide in an ATP-dependent reaction. LIG4 is mechanistically flexible: it can ligate nicks as well as compatible DNA overhangs alone, while in the presence of XRCC4, it can ligate ends with 2-nucleotides (nt) microhomology and 1-nt gaps. Forms a subcomplex with XRCC4; the LIG4-XRCC4 subcomplex is responsible for the NHEJ ligation step and XRCC4 enhances the joining activity of LIG4. Binding of the LIG4-XRCC4 complex to DNA ends is dependent on the assembly of the DNA-dependent protein kinase complex DNA-PK to these DNA ends. LIG4 regulates nuclear localization of XRCC4. This is DNA ligase 4 from Cricetulus griseus (Chinese hamster).